Reading from the N-terminus, the 427-residue chain is Trigger factor (427 aa).

Residues 163 to 248 (GDTVVIDFVG…IHEVKTKEVP (86 aa)) form the PPIase FKBP-type domain.

This sequence belongs to the FKBP-type PPIase family. Tig subfamily.

The protein localises to the cytoplasm. The catalysed reaction is [protein]-peptidylproline (omega=180) = [protein]-peptidylproline (omega=0). Functionally, involved in protein export. Acts as a chaperone by maintaining the newly synthesized protein in an open conformation. Functions as a peptidyl-prolyl cis-trans isomerase. This is Trigger factor from Streptococcus agalactiae serotype Ia (strain ATCC 27591 / A909 / CDC SS700).